A 300-amino-acid chain; its full sequence is Putative S-adenosyl-L-methionine-dependent methyltransferase MUL_0817 (300 aa).

S-adenosyl-L-methionine contacts are provided by residues Asp127 and 156-157 (DL).

Belongs to the UPF0677 family.

In terms of biological role, exhibits S-adenosyl-L-methionine-dependent methyltransferase activity. The polypeptide is Putative S-adenosyl-L-methionine-dependent methyltransferase MUL_0817 (Mycobacterium ulcerans (strain Agy99)).